A 492-amino-acid polypeptide reads, in one-letter code: Glutamyl-tRNA(Gln) amidotransferase subunit A (492 aa).

Active-site charge relay system residues include Lys78 and Ser158. The active-site Acyl-ester intermediate is the Ser182.

The protein belongs to the amidase family. GatA subfamily. In terms of assembly, heterotrimer of A, B and C subunits.

It catalyses the reaction L-glutamyl-tRNA(Gln) + L-glutamine + ATP + H2O = L-glutaminyl-tRNA(Gln) + L-glutamate + ADP + phosphate + H(+). Its function is as follows. Allows the formation of correctly charged Gln-tRNA(Gln) through the transamidation of misacylated Glu-tRNA(Gln) in organisms which lack glutaminyl-tRNA synthetase. The reaction takes place in the presence of glutamine and ATP through an activated gamma-phospho-Glu-tRNA(Gln). This is Glutamyl-tRNA(Gln) amidotransferase subunit A from Zymomonas mobilis subsp. mobilis (strain ATCC 31821 / ZM4 / CP4).